The chain runs to 61 residues: MSEKMIKVTQVRSVIGGTKKQKDTIKALGLGRPNHKVEIKDNACTRGQIRVVQHLVKVEEL.

The protein belongs to the universal ribosomal protein uL30 family. In terms of assembly, part of the 50S ribosomal subunit.

In Chlorobaculum tepidum (strain ATCC 49652 / DSM 12025 / NBRC 103806 / TLS) (Chlorobium tepidum), this protein is Large ribosomal subunit protein uL30.